Consider the following 151-residue polypeptide: Ribosome maturation factor RimP (151 aa).

It belongs to the RimP family.

The protein localises to the cytoplasm. In terms of biological role, required for maturation of 30S ribosomal subunits. The sequence is that of Ribosome maturation factor RimP from Vibrio cholerae serotype O1 (strain ATCC 39541 / Classical Ogawa 395 / O395).